The primary structure comprises 483 residues: Glutamate--tRNA ligase (483 aa).

The 'HIGH' region motif lies at proline 11–asparagine 21. Positions 108, 110, 135, and 137 each coordinate Zn(2+). The 'KMSKS' region motif lies at lysine 252–arginine 256. ATP is bound at residue lysine 255.

The protein belongs to the class-I aminoacyl-tRNA synthetase family. Glutamate--tRNA ligase type 1 subfamily. In terms of assembly, monomer. Zn(2+) is required as a cofactor.

It is found in the cytoplasm. The catalysed reaction is tRNA(Glu) + L-glutamate + ATP = L-glutamyl-tRNA(Glu) + AMP + diphosphate. Catalyzes the attachment of glutamate to tRNA(Glu) in a two-step reaction: glutamate is first activated by ATP to form Glu-AMP and then transferred to the acceptor end of tRNA(Glu). The sequence is that of Glutamate--tRNA ligase from Bacillus subtilis (strain 168).